A 380-amino-acid polypeptide reads, in one-letter code: Putative RNA ligase (380 aa).

Functionally, putative RNA ligase. Is able to catalyze the adenylation reaction of ssDNA 3'-terminal phosphate (ssDNA 3'p) to 3'-adenylated DNA (ssDNA 3'pp5'A). The polypeptide is Putative RNA ligase (Thermovibrio ammonificans (strain DSM 15698 / JCM 12110 / HB-1)).